Here is a 180-residue protein sequence, read N- to C-terminus: Large ribosomal subunit protein uL10 (180 aa).

Belongs to the universal ribosomal protein uL10 family. Part of the ribosomal stalk of the 50S ribosomal subunit. The N-terminus interacts with L11 and the large rRNA to form the base of the stalk. The C-terminus forms an elongated spine to which L12 dimers bind in a sequential fashion forming a multimeric L10(L12)X complex.

Its function is as follows. Forms part of the ribosomal stalk, playing a central role in the interaction of the ribosome with GTP-bound translation factors. The protein is Large ribosomal subunit protein uL10 of Thermosipho africanus (strain TCF52B).